The following is a 249-amino-acid chain: Diphthine synthase (249 aa).

Residues D83, L86, 111-112 (SI), L163, and L205 contribute to the S-adenosyl-L-methionine site.

Belongs to the diphthine synthase family. Homodimer.

It catalyses the reaction 2-[(3S)-amino-3-carboxypropyl]-L-histidyl-[translation elongation factor 2] + 3 S-adenosyl-L-methionine = diphthine-[translation elongation factor 2] + 3 S-adenosyl-L-homocysteine + 3 H(+). It participates in protein modification; peptidyl-diphthamide biosynthesis. Its function is as follows. S-adenosyl-L-methionine-dependent methyltransferase that catalyzes the trimethylation of the amino group of the modified target histidine residue in translation elongation factor 2 (EF-2), to form an intermediate called diphthine. The three successive methylation reactions represent the second step of diphthamide biosynthesis. The chain is Diphthine synthase from Pyrobaculum islandicum (strain DSM 4184 / JCM 9189 / GEO3).